Here is a 205-residue protein sequence, read N- to C-terminus: LexA repressor (205 aa).

A DNA-binding region (H-T-H motif) is located at residues 29 to 49 (IRDICKATGLRSSSTVYNYLN). Residues Ser-128 and Lys-165 each act as for autocatalytic cleavage activity in the active site.

This sequence belongs to the peptidase S24 family. Homodimer.

The enzyme catalyses Hydrolysis of Ala-|-Gly bond in repressor LexA.. Functionally, represses a number of genes involved in the response to DNA damage (SOS response), including recA and lexA. In the presence of single-stranded DNA, RecA interacts with LexA causing an autocatalytic cleavage which disrupts the DNA-binding part of LexA, leading to derepression of the SOS regulon and eventually DNA repair. This chain is LexA repressor, found in Moorella thermoacetica (strain ATCC 39073 / JCM 9320).